Consider the following 425-residue polypeptide: MRYTFSDEKKATTTTTSRAKSQARLLNSASYRRAARTTLRHSYGMGMWRAVALLACLSATHAALFTEGGAVQNGKDNKANKYVEFAHDDKINKEDLLKYYGKEVEQYKDDDSYMEYLIEYMKSHPVPAQFPNFEQEAEQEHQDELNQWLEQLMNEQELLEPANAAVKDAEQKAPLAPVHHKQVAQKPAQEPFDLDDLLRGELMLENEIAKESELKKTQEKLSEQTPSAKANVESLESAMQTATGEPQVPQKKGQNEFVSFVEQEPQPAKQTISSQTVDKRRLATSAEYSGSAPRYSSSSLLLLAVGTVMCVGLIGTVAGGTYYYKNNRRTETPDDGEYAPYAGTGPGFRKNKGNKGDETLAYKAQLHQYQQAKQKIICGEDAPGIIESDGEDGADEENNYSVYECPGLAPTGDIEVCNPNFAAQP.

The segment covering 1-11 (MRYTFSDEKKA) has biased composition (basic and acidic residues). Disordered stretches follow at residues 1–20 (MRYT…SRAK) and 214–251 (LKKT…VPQK). The interval 205–424 (ENEIAKESEL…EVCNPNFAAQ (220 aa)) is AEX-3-binding. Residues 300–320 (LLLLAVGTVMCVGLIGTVAGG) form a helical membrane-spanning segment. The disordered stretch occupies residues 334–355 (DDGEYAPYAGTGPGFRKNKGNK).

The protein belongs to the NPDC1/cab-1 family. In terms of assembly, binds to the RAB3 GDP/GTP exchange factor aex-3. As to expression, expressed in a variety of neurons.

It localises to the membrane. The sequence is that of Protein cab-1 (cab-1) from Caenorhabditis elegans.